A 510-amino-acid chain; its full sequence is NAD(P)H-quinone oxidoreductase subunit 2 A, chloroplastic (510 aa).

The next 13 membrane-spanning stretches (helical) occupy residues 24–44, 57–77, 99–119, 124–144, 149–169, 183–203, 227–247, 295–315, 323–343, 354–374, 395–415, 418–438, and 484–504; these read LLLFDGSLIFPECILIFGLIL, IPWLYFISSTSLVMSITALLF, IFQFLILLCSTLCIPLSVEYI, MALTEFLLFILTATLGGMFLC, LITIFVAPECFSLCSYLLSGY, YLLMGGASSSILVHGFSWLYG, PGISIALIFITVGIGFKLSPA, WHLLLEILAILSMILGNLIAI, MLAYSSIGQIGYVIIGIIVGD, YMLFYISMNLGTFACIVLFGL, ALSLALCLLSLGGLPPLAGFF, IYLFWCGWQAGLYFLVLIGLL, and MIVCVIASTIPGISMNPIITI.

The protein belongs to the complex I subunit 2 family. In terms of assembly, NDH is composed of at least 16 different subunits, 5 of which are encoded in the nucleus.

The protein resides in the plastid. Its subcellular location is the chloroplast thylakoid membrane. The catalysed reaction is a plastoquinone + NADH + (n+1) H(+)(in) = a plastoquinol + NAD(+) + n H(+)(out). It carries out the reaction a plastoquinone + NADPH + (n+1) H(+)(in) = a plastoquinol + NADP(+) + n H(+)(out). Functionally, NDH shuttles electrons from NAD(P)H:plastoquinone, via FMN and iron-sulfur (Fe-S) centers, to quinones in the photosynthetic chain and possibly in a chloroplast respiratory chain. The immediate electron acceptor for the enzyme in this species is believed to be plastoquinone. Couples the redox reaction to proton translocation, and thus conserves the redox energy in a proton gradient. The polypeptide is NAD(P)H-quinone oxidoreductase subunit 2 A, chloroplastic (Spinacia oleracea (Spinach)).